The sequence spans 258 residues: Phosphate import ATP-binding protein PstB 2 (258 aa).

Positions 12-253 (IQVRDLNFYY…PRQKQTEDYI (242 aa)) constitute an ABC transporter domain. Residue 44–51 (GPSGCGKS) participates in ATP binding.

It belongs to the ABC transporter superfamily. Phosphate importer (TC 3.A.1.7) family. As to quaternary structure, the complex is composed of two ATP-binding proteins (PstB), two transmembrane proteins (PstC and PstA) and a solute-binding protein (PstS).

It is found in the cell inner membrane. The catalysed reaction is phosphate(out) + ATP + H2O = ADP + 2 phosphate(in) + H(+). In terms of biological role, part of the ABC transporter complex PstSACB involved in phosphate import. Responsible for energy coupling to the transport system. The protein is Phosphate import ATP-binding protein PstB 2 of Pectobacterium atrosepticum (strain SCRI 1043 / ATCC BAA-672) (Erwinia carotovora subsp. atroseptica).